A 271-amino-acid polypeptide reads, in one-letter code: NAD kinase (271 aa).

Residue D64 is the Proton acceptor of the active site. NAD(+) is bound by residues D64–G65, R69, N132–E133, K143, R160, D162, T173–S178, A197, and Q231.

The protein belongs to the NAD kinase family. Requires a divalent metal cation as cofactor.

The protein localises to the cytoplasm. The enzyme catalyses NAD(+) + ATP = ADP + NADP(+) + H(+). Its function is as follows. Involved in the regulation of the intracellular balance of NAD and NADP, and is a key enzyme in the biosynthesis of NADP. Catalyzes specifically the phosphorylation on 2'-hydroxyl of the adenosine moiety of NAD to yield NADP. This Methanocorpusculum labreanum (strain ATCC 43576 / DSM 4855 / Z) protein is NAD kinase.